A 286-amino-acid chain; its full sequence is Prepilin leader peptidase/N-methyltransferase (286 aa).

A helical transmembrane segment spans residues 10-30 (FAVPLAAVLGLLVGSFLNVVI). Residues Cys70, Cys73, Cys95, and Cys98 each coordinate Zn(2+). A run of 6 helical transmembrane segments spans residues 102-122 (ISIR…LVAW), 126-146 (WSWI…LTFI), 157-177 (MTLP…FVPL), 181-201 (VLGA…YKLL), 224-244 (ISAL…AAIV), and 250-270 (GRHF…FTAN).

The protein belongs to the peptidase A24 family. Requires Zn(2+) as cofactor.

It is found in the cell inner membrane. The enzyme catalyses Typically cleaves a -Gly-|-Phe- bond to release an N-terminal, basic peptide of 5-8 residues from type IV prepilin, and then N-methylates the new N-terminal amino group, the methyl donor being S-adenosyl-L-methionine.. Plays an essential role in type IV pili and type II pseudopili formation by proteolytically removing the leader sequence from substrate proteins and subsequently monomethylating the alpha-amino group of the newly exposed N-terminal phenylalanine. In Neisseria gonorrhoeae, this protein is Prepilin leader peptidase/N-methyltransferase (pilD).